The chain runs to 380 residues: Crotonobetainyl-CoA reductase (380 aa).

The protein belongs to the acyl-CoA dehydrogenase family. As to quaternary structure, homotetramer. It depends on FAD as a cofactor.

The protein resides in the cytoplasm. It carries out the reaction 4-(trimethylamino)butanoyl-CoA + oxidized [electron-transfer flavoprotein] + H(+) = crotonobetainyl-CoA + reduced [electron-transfer flavoprotein]. It participates in amine and polyamine metabolism; carnitine metabolism. Functionally, catalyzes the reduction of crotonobetainyl-CoA to gamma-butyrobetainyl-CoA. The protein is Crotonobetainyl-CoA reductase of Salmonella arizonae (strain ATCC BAA-731 / CDC346-86 / RSK2980).